Here is a 177-residue protein sequence, read N- to C-terminus: MVAIKNLVLVALTAVTALAMPSPLEERAATWTCMNEQKNPKTNKYENKRLLYNQNNAESNAHHAPLSDGKTGSSYPHWFTNGYDGDGKILKGRTPIKWGNSDCDRPPKHSKNGDGKNDHYLLEFPTFPDGHQYNFDSKKPKEDPGPARVIYTYPNKVFCGIVAHTRENQGDLKLCSH.

A signal peptide spans 1–27 (MVAIKNLVLVALTAVTALAMPSPLEER). 2 disulfides stabilise this stretch: Cys33–Cys175 and Cys103–Cys159. Residue His77 is part of the active site. The disordered stretch occupies residues 98–117 (WGNSDCDRPPKHSKNGDGKN). Positions 102-117 (DCDRPPKHSKNGDGKN) are enriched in basic and acidic residues. The Proton acceptor role is filled by Glu123. His164 acts as the Proton donor in catalysis.

This sequence belongs to the ribonuclease U2 family.

The protein resides in the secreted. In terms of biological role, clavin has the same substrate specificity as alpha-sarcin. It is specific for purines in both single- and double-stranded RNA. Its toxic action on eukaryotic cells is the result of cleavage of a single phosphodiester bond in the 60S subunit of ribosomes. This Aspergillus clavatus (strain ATCC 1007 / CBS 513.65 / DSM 816 / NCTC 3887 / NRRL 1 / QM 1276 / 107) protein is Ribonuclease clavin (cla).